We begin with the raw amino-acid sequence, 266 residues long: Regulatory protein RecX (266 aa).

It belongs to the RecX family.

It is found in the cytoplasm. Its function is as follows. Modulates RecA activity. This chain is Regulatory protein RecX, found in Leuconostoc citreum (strain KM20).